The following is a 137-amino-acid chain: Phosphoribosyl-AMP cyclohydrolase (137 aa).

D84 is a Mg(2+) binding site. C85 serves as a coordination point for Zn(2+). Mg(2+) contacts are provided by D86 and D88. Residues C101 and C108 each coordinate Zn(2+).

It belongs to the PRA-CH family. In terms of assembly, homodimer. It depends on Mg(2+) as a cofactor. Zn(2+) serves as cofactor.

It localises to the cytoplasm. The catalysed reaction is 1-(5-phospho-beta-D-ribosyl)-5'-AMP + H2O = 1-(5-phospho-beta-D-ribosyl)-5-[(5-phospho-beta-D-ribosylamino)methylideneamino]imidazole-4-carboxamide. It functions in the pathway amino-acid biosynthesis; L-histidine biosynthesis; L-histidine from 5-phospho-alpha-D-ribose 1-diphosphate: step 3/9. In terms of biological role, catalyzes the hydrolysis of the adenine ring of phosphoribosyl-AMP. This chain is Phosphoribosyl-AMP cyclohydrolase, found in Chlorobium limicola (strain DSM 245 / NBRC 103803 / 6330).